Here is a 204-residue protein sequence, read N- to C-terminus: uncharacterized protein (204 aa).

The active-site Tele-phosphohistidine intermediate is the His9. Catalysis depends on Glu86, which acts as the Proton donor/acceptor.

This sequence belongs to the phosphoglycerate mutase family.

This is an uncharacterized protein from Acanthamoeba polyphaga (Amoeba).